Here is a 1608-residue protein sequence, read N- to C-terminus: Hemolysin (1608 aa).

Residues 1–30 (MKNNNFRLSAAGKLAAALAIILAASAGAYA) form the signal peptide. Disordered stretches follow at residues 296 to 315 (SRVD…QNYR), 452 to 488 (KSSE…LRSE), 716 to 737 (EHTR…LSGG), 971 to 1030 (AVNL…SASQ), 1168 to 1199 (AEST…TGGN), and 1437 to 1469 (PQQD…QGPL). 2 stretches are compositionally biased toward polar residues: residues 303 to 313 (SNKNGGDNYQN) and 460 to 474 (RNHT…WSNS). Basic and acidic residues-rich tracts occupy residues 478–488 (ESLKASELRSE) and 716–726 (EHTRDSEKTTR). Over residues 727 to 736 (TENSASSLSG) the composition is skewed to polar residues. The segment covering 977–996 (DSHRSEAAANRQDEQSRDTR) has biased composition (basic and acidic residues). Residues 1021–1030 (TQRSNSSASQ) are compositionally biased toward polar residues.

The protein resides in the cell outer membrane. Its function is as follows. Bacterial hemolysins are exotoxins that attack blood cell membranes and cause cell rupture by mechanisms not clearly defined. In terms of biological role, cell-bound hemolysin, which releases heme-iron from erythrocytes by interaction with the erythrocyte membrane. ShlA requires ShlB function. In Serratia marcescens, this protein is Hemolysin (shlA).